Consider the following 355-residue polypeptide: Na(+)/H(+) exchange regulatory cofactor NHE-RF1 (355 aa).

Residue S2 is modified to N-acetylserine. 2 positions are modified to phosphoserine: S2 and S46. Positions 14 to 94 constitute a PDZ 1 domain; the sequence is LCCLEKGPNG…AVRLLVVDPE (81 aa). 2 stretches are compositionally biased toward basic and acidic residues: residues 110 to 119 and 127 to 146; these read LLRPQEKSEQ and DTHE…RELR. Positions 110 to 146 are disordered; it reads LLRPQEKSEQAEPPAAADTHEAGDQNEAEKSHLRELR. One can recognise a PDZ 2 domain in the interval 149–229; that stretch reads LCTMKKGPNG…EAKLLVVDKE (81 aa). Residues 244–355 are disordered; sequence EHLDGPLPEP…SKKNELFSNL (112 aa). A compositionally biased stretch (basic and acidic residues) spans 259 to 268; it reads IQKESSREAL. Phosphoserine occurs at positions 264, 275, 285, and 286. Low complexity predominate over residues 270–286; sequence EPASESPRPALARSASS. Phosphothreonine is present on T288. Phosphoserine is present on residues S289, S294, and S297. The segment covering 303 to 323 has biased composition (low complexity); the sequence is STEPSSTSSSSSDPILDLNIS. The segment covering 345–355 has biased composition (basic and acidic residues); that stretch reads WSKKNELFSNL.

As to quaternary structure, homodimer, and heterodimer with NHERF2. Binds the N-termini of EZR, RDX and MSN. Binds the C-termini of PDGFRA, PDGFRB, ADRB2 and NOS2. Binds ARHGAP17, EPI64, RACK1, OPRK1, GNAQ, CTNNB1, PLCB3 and CLCN3. Forms a complex with CFTR and SLC4A7. Forms a complex with SLC4A7 and ATP6V1B1. Binds PDZK1. Binds the C-terminus of PAG1. In resting T-cells, part of a PAG1-NHERF1-MSN complex which is disrupted upon TCR activation. Directly interacts with HTR4. Interacts with MCC. Interacts with TRPC4 (via the PDZ-binding domain). Interacts (via the PDZ 1 domain) with PODXL (via the C-terminal PDZ-binding motif DTHL); interaction is not detected in glomerular epithelium cells. Interacts (via the PDZ 1 domain) with PODXL (via the C-terminal PDZ-binding motif DTHL); the interaction take place early in the secretory pathway and is necessary for its apical membrane sorting. Interacts with SLC34A1. Interacts with CFTR, SLC26A3 and SLC26A6. Interacts (via PDZ domains) with ACE2 (via PDZ-binding motif); the interaction may enhance ACE2 membrane residence. As to expression, expressed in spermatogenic cells.

The protein localises to the cytoplasm. The protein resides in the apical cell membrane. It localises to the cell projection. Its subcellular location is the filopodium. It is found in the ruffle. The protein localises to the microvillus. The protein resides in the endomembrane system. Its function is as follows. Scaffold protein that connects plasma membrane proteins with members of the ezrin/moesin/radixin family and thereby helps to link them to the actin cytoskeleton and to regulate their surface expression. Necessary for recycling of internalized ADRB2. Was first known to play a role in the regulation of the activity and subcellular location of SLC9A3. Necessary for cAMP-mediated phosphorylation and inhibition of SLC9A3. May enhance Wnt signaling. May participate in HTR4 targeting to microvilli. Involved in the regulation of phosphate reabsorption in the renal proximal tubules. Involved in sperm capacitation. May participate in the regulation of the chloride and bicarbonate homeostasis in spermatozoa. This chain is Na(+)/H(+) exchange regulatory cofactor NHE-RF1 (Nherf1), found in Mus musculus (Mouse).